Consider the following 1788-residue polypeptide: Protein TIC 214 (1788 aa).

6 helical membrane passes run 25–45 (IINS…FSIG), 70–90 (IGFI…PLHL), 95–115 (PHTI…WNNH), 132–152 (LNIQ…HFIL), 180–200 (VGWL…LFWI), and 223–243 (IFSI…PSPL). Disordered stretches follow at residues 248-297 (LKKT…EEKE) and 1482-1526 (DLEN…DFDR). 2 stretches are compositionally biased toward basic and acidic residues: residues 253–277 (KREE…EKGT) and 1513–1526 (PLKK…DFDR).

It belongs to the TIC214 family. Part of the Tic complex.

It is found in the plastid. It localises to the chloroplast inner membrane. Functionally, involved in protein precursor import into chloroplasts. May be part of an intermediate translocation complex acting as a protein-conducting channel at the inner envelope. In Ranunculus macranthus (Large buttercup), this protein is Protein TIC 214.